Consider the following 297-residue polypeptide: Ribosomal RNA small subunit methyltransferase H (297 aa).

Residues 37–39 (GGH), Asp56, Phe87, Asp102, and His109 each bind S-adenosyl-L-methionine.

The protein belongs to the methyltransferase superfamily. RsmH family.

The protein resides in the cytoplasm. It catalyses the reaction cytidine(1402) in 16S rRNA + S-adenosyl-L-methionine = N(4)-methylcytidine(1402) in 16S rRNA + S-adenosyl-L-homocysteine + H(+). Specifically methylates the N4 position of cytidine in position 1402 (C1402) of 16S rRNA. The polypeptide is Ribosomal RNA small subunit methyltransferase H (Borrelia turicatae (strain 91E135)).